The sequence spans 348 residues: Rhodopsin (348 aa).

Position 1 is an N-acetylmethionine (Met1). At 1 to 36 (MNGTEGPNFYVPFSNVTGVVRSPFEQPQYYLAEPWQ) the chain is on the extracellular side. Asn2 and Asn15 each carry an N-linked (GlcNAc...) asparagine glycan. The helical transmembrane segment at 37 to 61 (FSMLAAYMFLLIVLGFPINFLTLYV) threads the bilayer. Over 62 to 73 (TVQHKKLRTPLN) the chain is Cytoplasmic. The helical transmembrane segment at 74 to 96 (YILLNLAVADLFMVFGGFTTTLY) threads the bilayer. The Extracellular segment spans residues 97–110 (TSLHGYFVFGPTGC). Cys110 and Cys187 are disulfide-bonded. Residues 111–133 (NLEGFFATLGGEIALWSLVVLAI) form a helical membrane-spanning segment. The 'Ionic lock' involved in activated form stabilization motif lies at 134–136 (ERY). Residues 134–152 (ERYVVVCKPMSNFRFGENH) are Cytoplasmic-facing. A helical membrane pass occupies residues 153–173 (AIMGVVFTWIMALACAAPPLV). Over 174 to 202 (GWSRYIPEGMQCSCGIDYYTLKPEVNNES) the chain is Extracellular. Zn(2+) is bound at residue Glu201. The chain crosses the membrane as a helical span at residues 203–224 (FVIYMFVVHFTIPMIVIFFCYG). Residues 225–252 (QLVFTVKEAAAQQQESATTQKAEKEVTR) are Cytoplasmic-facing. A helical transmembrane segment spans residues 253 to 274 (MVIIMVIFFLICWLPYASVAFY). At 275–286 (IFTHQGSNFGPI) the chain is on the extracellular side. Gln279 is a Zn(2+) binding site. Residues 287–308 (FMTLPAFFAKSSSIYNPVIYIM) traverse the membrane as a helical segment. An N6-(retinylidene)lysine modification is found at Lys296. Over 309-348 (LNKQFRNCMLTTLCCGKNPLGDDDASATASKTETSQVAPA) the chain is Cytoplasmic. Residues Cys322 and Cys323 are each lipidated (S-palmitoyl cysteine). An interaction with SAG region spans residues 330–348 (DDDASATASKTETSQVAPA). Ser334 is modified (phosphoserine). Thr336 bears the Phosphothreonine mark. A Phosphoserine modification is found at Ser338. Thr340 and Thr342 each carry phosphothreonine. Ser343 carries the phosphoserine modification.

This sequence belongs to the G-protein coupled receptor 1 family. Opsin subfamily. Homodimer. May form a complex composed of RHO, GRK1 and RCVRN in a Ca(2+)-dependent manner; RCVRN prevents the interaction between GRK1 and RHO. Interacts with GRK1. Interacts (phosphorylated form) with SAG. Interacts with GNAT1. Interacts with GNAT3. SAG and G-proteins compete for a common binding site. Interacts with PRCD; the interaction promotes PRCD stability. Forms a complex with ASAP1 and ARF4. Forms a complex with ASAP1, RAB11A, Rabin8/RAB3IP, ARF4 and RAB11FIP3; the complex regulates Golgi-to-cilia rhodopsin/RHO transport in photoreceptors. In terms of processing, phosphorylated on some or all of the serine and threonine residues present in the C-terminal region. Post-translationally, contains one covalently linked retinal chromophore. Upon light absorption, the covalently bound 11-cis-retinal is converted to all-trans-retinal. After hydrolysis of the Schiff base and release of the covalently bound all-trans-retinal, active rhodopsin is regenerated by binding of a fresh molecule of 11-cis-retinal. In terms of tissue distribution, rod-shaped photoreceptor cells in the retina (at protein level).

The protein resides in the membrane. Its subcellular location is the cell projection. It localises to the cilium. It is found in the photoreceptor outer segment. Its function is as follows. Photoreceptor required for image-forming vision at low light intensity. Required for photoreceptor cell viability after birth. Light-induced isomerization of 11-cis to all-trans retinal triggers a conformational change that activates signaling via G-proteins. Subsequent receptor phosphorylation mediates displacement of the bound G-protein alpha subunit by the arrestin SAG and terminates signaling. This chain is Rhodopsin (Rho), found in Mus musculus (Mouse).